An 879-amino-acid chain; its full sequence is Bifunctional uridylyltransferase/uridylyl-removing enzyme (879 aa).

Residues 1–340 (MANVQEDKDF…GTQDLQHAEH (340 aa)) are uridylyltransferase. The interval 341 to 700 (ISDDFAVANK…IGDENNYGTT (360 aa)) is uridylyl-removing. Residues 458–580 (VDEHTFRLVR…VSTPERLDYL (123 aa)) form the HD domain. 2 ACT domains span residues 701–782 (ELFI…STKR) and 809–879 (TFEL…DLEF).

This sequence belongs to the GlnD family. Mg(2+) is required as a cofactor.

It carries out the reaction [protein-PII]-L-tyrosine + UTP = [protein-PII]-uridylyl-L-tyrosine + diphosphate. The catalysed reaction is [protein-PII]-uridylyl-L-tyrosine + H2O = [protein-PII]-L-tyrosine + UMP + H(+). With respect to regulation, uridylyltransferase (UTase) activity is inhibited by glutamine, while glutamine activates uridylyl-removing (UR) activity. Functionally, modifies, by uridylylation and deuridylylation, the PII regulatory proteins (GlnB and homologs), in response to the nitrogen status of the cell that GlnD senses through the glutamine level. Under low glutamine levels, catalyzes the conversion of the PII proteins and UTP to PII-UMP and PPi, while under higher glutamine levels, GlnD hydrolyzes PII-UMP to PII and UMP (deuridylylation). Thus, controls uridylylation state and activity of the PII proteins, and plays an important role in the regulation of nitrogen assimilation and metabolism. This is Bifunctional uridylyltransferase/uridylyl-removing enzyme from Idiomarina loihiensis (strain ATCC BAA-735 / DSM 15497 / L2-TR).